The primary structure comprises 522 residues: Lysine--tRNA ligase (522 aa).

The 'HIGH' region motif lies at 44–52 (PSGLPHIGT). The short motif at 290–294 (KISKS) is the 'KMSKS' region element. K293 lines the ATP pocket.

The protein belongs to the class-I aminoacyl-tRNA synthetase family.

It is found in the cytoplasm. The enzyme catalyses tRNA(Lys) + L-lysine + ATP = L-lysyl-tRNA(Lys) + AMP + diphosphate. This chain is Lysine--tRNA ligase, found in Rickettsia bellii (strain RML369-C).